The primary structure comprises 416 residues: (S)-ureidoglycine--glyoxylate transaminase (416 aa).

At Lys-198 the chain carries N6-(pyridoxal phosphate)lysine.

The protein belongs to the class-V pyridoxal-phosphate-dependent aminotransferase family. Homodimer. Pyridoxal 5'-phosphate serves as cofactor.

The enzyme catalyses (S)-2-ureidoglycine + glyoxylate = N-carbamoyl-2-oxoglycine + glycine. It participates in nitrogen metabolism; (S)-allantoin degradation. Its function is as follows. Catalyzes the transamination between an unstable intermediate ((S)-ureidoglycine) and the end product of purine catabolism (glyoxylate) to yield oxalurate and glycine. Glyoxylate is the preferred substrate, but other amino-group acceptors can be used. This Bacillus subtilis (strain 168) protein is (S)-ureidoglycine--glyoxylate transaminase.